The following is a 94-amino-acid chain: Aspartyl/glutamyl-tRNA(Asn/Gln) amidotransferase subunit C (94 aa).

The protein belongs to the GatC family. As to quaternary structure, heterotrimer of A, B and C subunits.

It carries out the reaction L-glutamyl-tRNA(Gln) + L-glutamine + ATP + H2O = L-glutaminyl-tRNA(Gln) + L-glutamate + ADP + phosphate + H(+). The enzyme catalyses L-aspartyl-tRNA(Asn) + L-glutamine + ATP + H2O = L-asparaginyl-tRNA(Asn) + L-glutamate + ADP + phosphate + 2 H(+). Allows the formation of correctly charged Asn-tRNA(Asn) or Gln-tRNA(Gln) through the transamidation of misacylated Asp-tRNA(Asn) or Glu-tRNA(Gln) in organisms which lack either or both of asparaginyl-tRNA or glutaminyl-tRNA synthetases. The reaction takes place in the presence of glutamine and ATP through an activated phospho-Asp-tRNA(Asn) or phospho-Glu-tRNA(Gln). This chain is Aspartyl/glutamyl-tRNA(Asn/Gln) amidotransferase subunit C, found in Nitratidesulfovibrio vulgaris (strain ATCC 29579 / DSM 644 / CCUG 34227 / NCIMB 8303 / VKM B-1760 / Hildenborough) (Desulfovibrio vulgaris).